Here is a 209-residue protein sequence, read N- to C-terminus: tRNA (guanine-N(7)-)-methyltransferase (209 aa).

The S-adenosyl-L-methionine site is built by Glu40, Glu65, and Asp114. Asp114 is a catalytic residue. Substrate-binding positions include Asp150 and 188-191 (TAFE).

Belongs to the class I-like SAM-binding methyltransferase superfamily. TrmB family.

The catalysed reaction is guanosine(46) in tRNA + S-adenosyl-L-methionine = N(7)-methylguanosine(46) in tRNA + S-adenosyl-L-homocysteine. It functions in the pathway tRNA modification; N(7)-methylguanine-tRNA biosynthesis. In terms of biological role, catalyzes the formation of N(7)-methylguanine at position 46 (m7G46) in tRNA. The protein is tRNA (guanine-N(7)-)-methyltransferase of Bdellovibrio bacteriovorus (strain ATCC 15356 / DSM 50701 / NCIMB 9529 / HD100).